Here is a 164-residue protein sequence, read N- to C-terminus: Small ribosomal subunit protein uS5 (164 aa).

Positions 9-72 constitute an S5 DRBM domain; sequence YQEKLLKISR…AAAKKNIVKI (64 aa).

It belongs to the universal ribosomal protein uS5 family. In terms of assembly, part of the 30S ribosomal subunit. Contacts proteins S4 and S8.

Functionally, with S4 and S12 plays an important role in translational accuracy. Its function is as follows. Located at the back of the 30S subunit body where it stabilizes the conformation of the head with respect to the body. This is Small ribosomal subunit protein uS5 from Fusobacterium nucleatum subsp. nucleatum (strain ATCC 25586 / DSM 15643 / BCRC 10681 / CIP 101130 / JCM 8532 / KCTC 2640 / LMG 13131 / VPI 4355).